We begin with the raw amino-acid sequence, 400 residues long: DNA primase small subunit PriS (400 aa).

Catalysis depends on residues Asp-98, Asp-100, and Asp-306.

The protein belongs to the eukaryotic-type primase small subunit family. As to quaternary structure, heterodimer of a small subunit (PriS) and a large subunit (PriL). The cofactor is Mg(2+). Requires Mn(2+) as cofactor.

In terms of biological role, catalytic subunit of DNA primase, an RNA polymerase that catalyzes the synthesis of short RNA molecules used as primers for DNA polymerase during DNA replication. The small subunit contains the primase catalytic core and has DNA synthesis activity on its own. Binding to the large subunit stabilizes and modulates the activity, increasing the rate of DNA synthesis while decreasing the length of the DNA fragments, and conferring RNA synthesis capability. The DNA polymerase activity may enable DNA primase to also catalyze primer extension after primer synthesis. May also play a role in DNA repair. This Methanocella arvoryzae (strain DSM 22066 / NBRC 105507 / MRE50) protein is DNA primase small subunit PriS.